Here is a 141-residue protein sequence, read N- to C-terminus: NADH dehydrogenase [ubiquinone] 1 alpha subcomplex subunit 11 (141 aa).

Position 2 is an N-acetylalanine (Ala-2). Transmembrane regions (helical) follow at residues 22–43 (TYAT…SVAL) and 58–80 (RYTF…SAQV).

Complex I is composed of 45 different subunits.

Its subcellular location is the mitochondrion inner membrane. In terms of biological role, accessory subunit of the mitochondrial membrane respiratory chain NADH dehydrogenase (Complex I), that is believed not to be involved in catalysis. Complex I functions in the transfer of electrons from NADH to the respiratory chain. The immediate electron acceptor for the enzyme is believed to be ubiquinone. The chain is NADH dehydrogenase [ubiquinone] 1 alpha subcomplex subunit 11 (NDUFA11) from Bos taurus (Bovine).